We begin with the raw amino-acid sequence, 181 residues long: Large ribosomal subunit protein uL10 (181 aa).

The protein belongs to the universal ribosomal protein uL10 family. As to quaternary structure, part of the ribosomal stalk of the 50S ribosomal subunit. The N-terminus interacts with L11 and the large rRNA to form the base of the stalk. The C-terminus forms an elongated spine to which L12 dimers bind in a sequential fashion forming a multimeric L10(L12)X complex.

Forms part of the ribosomal stalk, playing a central role in the interaction of the ribosome with GTP-bound translation factors. This is Large ribosomal subunit protein uL10 from Chloroflexus aggregans (strain MD-66 / DSM 9485).